The sequence spans 454 residues: MTVQIDELDDKDLDEIIANGTLDGAKQGAVDSETMIQYYRHLFPWKYLFQWLNHGPVVTNDFAHREFAFTLPNDAYIRYLSFSNWEELKKEALNLCPSRFEVGPVYSANPRDRKTIRKSTFHPLKKELVFDIDMTDYDDVRTCCSKTNICEKCWPFITIAVQVLDICFHEDFGFKHILWVYSGRRGIHAWICDEIACSLDDRSRRMIASYLQVVVGNPQGGVRLINNLKRPLHPHLTRSLNILKSAFVKIVLEDQDPWASKEGAENLLKLLPDKDLASALRKKWEVDPERSSKNKWSDIDTVLASGSIASISPSVIAIAKQDIVLTYLYPRLDVEVSRHLNHLLKSPFCVHPGTSRVCVPIDIERMDSFNPLKVPTVNDLLQELDKNSQNDNGHGPTMETNTTENQKDNARGQSNKGHGFSTSLNPYTLYFKSFSSQLFKETVGNKRKHENLEF.

Active-site residues include glutamate 66, aspartate 131, and aspartate 133. Aspartate 131 and aspartate 133 together coordinate Mg(2+). Positions 131 and 133 each coordinate Mn(2+). 131–133 (DID) lines the a ribonucleoside 5'-triphosphate pocket. Zn(2+) contacts are provided by cysteine 143, cysteine 144, cysteine 150, and cysteine 153. The short motif at 143–153 (CCSKTNICEKC) is the Zinc knuckle motif element. 182-188 (SGRRGIH) is an a ribonucleoside 5'-triphosphate binding site. Aspartate 333 lines the Mg(2+) pocket. A Mn(2+)-binding site is contributed by aspartate 333. 342–345 (HLLK) contributes to the a ribonucleoside 5'-triphosphate binding site. Positions 385–420 (DKNSQNDNGHGPTMETNTTENQKDNARGQSNKGHGF) are disordered. 2 stretches are compositionally biased toward polar residues: residues 389 to 404 (QNDN…NTTE) and 411 to 420 (RGQSNKGHGF).

It belongs to the eukaryotic-type primase small subunit family. In terms of assembly, heterodimer of a catalytic subunit spp1/pri1 and a regulatory subunit spp2/pri2, also known as the DNA primase complex. Component of the alpha DNA polymerase complex (also known as the alpha DNA polymerase-primase complex) consisting of four subunits: the catalytic subunit pol1, the accessory subunit spb70/pol12, and the primase complex subunits spp1/pri1 and spp2/pri2 respectively. It depends on Mg(2+) as a cofactor. Requires Mn(2+) as cofactor.

The protein resides in the nucleus. It carries out the reaction ssDNA + n NTP = ssDNA/pppN(pN)n-1 hybrid + (n-1) diphosphate.. Its function is as follows. Catalytic subunit of the DNA primase complex and component of the DNA polymerase alpha complex (also known as the alpha DNA polymerase-primase complex - primosome/replisome) which play an essential role in the initiation of DNA synthesis. During the S phase of the cell cycle, the DNA polymerase alpha complex (composed of a catalytic subunit pol1, an accessory subunit spb70/pol12 and two primase subunits, the catalytic subunit spp1/pri1 and the regulatory subunit spp2/pri2) is recruited to DNA at the replicative forks. The primase subunit of the polymerase alpha complex initiates DNA synthesis by oligomerising short RNA primers on both leading and lagging strands. This Schizosaccharomyces pombe (strain 972 / ATCC 24843) (Fission yeast) protein is DNA primase small subunit.